The following is a 922-amino-acid chain: Putative ATP-dependent helicase/translocase YwqA (922 aa).

The 164-residue stretch at 462 to 625 (LFLRESGFGA…WSIFDFMNKG (164 aa)) folds into the Helicase ATP-binding domain. Residue 475–482 (DDMGLGKT) coordinates ATP. The DEAQ box motif lies at 576 to 579 (DEAQ). In terms of domain architecture, Helicase C-terminal spans 753–907 (KLLELMTAIR…QSENWITELS (155 aa)).

It belongs to the SNF2/RAD54 helicase family. Interacts with the RNA polymerase core.

The protein is Putative ATP-dependent helicase/translocase YwqA (ywqA) of Bacillus subtilis (strain 168).